The primary structure comprises 281 residues: Ribosomal RNA small subunit methyltransferase A (281 aa).

6 residues coordinate S-adenosyl-L-methionine: Asn36, Leu38, Gly63, Glu84, Asp109, and Asn127.

It belongs to the class I-like SAM-binding methyltransferase superfamily. rRNA adenine N(6)-methyltransferase family. RsmA subfamily.

The protein resides in the cytoplasm. The catalysed reaction is adenosine(1518)/adenosine(1519) in 16S rRNA + 4 S-adenosyl-L-methionine = N(6)-dimethyladenosine(1518)/N(6)-dimethyladenosine(1519) in 16S rRNA + 4 S-adenosyl-L-homocysteine + 4 H(+). Functionally, specifically dimethylates two adjacent adenosines (A1518 and A1519) in the loop of a conserved hairpin near the 3'-end of 16S rRNA in the 30S particle. May play a critical role in biogenesis of 30S subunits. The polypeptide is Ribosomal RNA small subunit methyltransferase A (Borreliella burgdorferi (strain ATCC 35210 / DSM 4680 / CIP 102532 / B31) (Borrelia burgdorferi)).